Consider the following 211-residue polypeptide: Thymidine kinase (211 aa).

Residues 9-16 (STMNAGKS) and 87-90 (DEAQ) contribute to the ATP site. Residue glutamate 88 is the Proton acceptor of the active site. 4 residues coordinate Zn(2+): cysteine 145, cysteine 147, cysteine 182, and histidine 185.

It belongs to the thymidine kinase family. In terms of assembly, homotetramer.

It is found in the cytoplasm. The enzyme catalyses thymidine + ATP = dTMP + ADP + H(+). The chain is Thymidine kinase from Rhodopirellula baltica (strain DSM 10527 / NCIMB 13988 / SH1).